Consider the following 387-residue polypeptide: Galanin receptor type 2 (387 aa).

At 1–28 (MNVSGCPGAGNASQAGGGGGWHPEAVIV) the chain is on the extracellular side. 2 N-linked (GlcNAc...) asparagine glycosylation sites follow: Asn2 and Asn11. The chain crosses the membrane as a helical span at residues 29–49 (PLLFALIFLVGTVGNTLVLAV). The Cytoplasmic portion of the chain corresponds to 50-60 (LLRGGQAVSTT). Residues 61–81 (NLFILNLGVADLCFILCCVPF) traverse the membrane as a helical segment. Residues 82–99 (QATIYTLDGWVFGSLLCK) lie on the Extracellular side of the membrane. Cys98 and Cys175 form a disulfide bridge. Residues 100–121 (AVHFLIFLTMHASSFTLAAVSL) form a helical membrane-spanning segment. The Cytoplasmic segment spans residues 122 to 141 (DRYLAIRYPLHSRELRTPRN). The chain crosses the membrane as a helical span at residues 142-162 (ALAAIGLIWGLSLLFSGPYLS). Over 163 to 187 (YYRQSQLANLTVCHPAWSAPRRRAM) the chain is Extracellular. Residues 188-208 (DICTFVFSYLLPVLVLGLTYA) form a helical membrane-spanning segment. At 209 to 237 (RTLRYLWRAVDPVAAGSGARRAKRKVTRM) the chain is on the cytoplasmic side. A helical membrane pass occupies residues 238–258 (ILIVAALFCLCWMPHHALILC). Residues 259–260 (VW) are Extracellular-facing. The chain crosses the membrane as a helical span at residues 261-281 (FGQFPLTRATYALRILSHLVS). Residues 282–387 (YANSCVNPIV…GDSILTVDVA (106 aa)) are Cytoplasmic-facing.

The protein belongs to the G-protein coupled receptor 1 family. In terms of tissue distribution, expressed abundantly within the central nervous system in both hypothalamus and hippocampus. In peripheral tissues, the strongest expression was observed in heart, kidney, liver, and small intestine.

Its subcellular location is the cell membrane. Receptor for the hormone galanin and GALP. Receptor for the hormone spexin-1. The activity of this receptor is mediated by G proteins that activate the phospholipase C/protein kinase C pathway (via G(q)) and that inhibit adenylyl cyclase (via G(i)). This is Galanin receptor type 2 (GALR2) from Homo sapiens (Human).